The sequence spans 393 residues: MPKKKPTPIQLNPTPDGSAVNGTSSAETNLEALQKKLEELELEEQQRNRLEAFLTQKQKVGELKDDDFEKISELGAGNGGVVFKVSHKPSGLVMARKLIHLEIKPAIRNQIIRELQVLHECNSPYIVGFYGVFYSDGEISICMEHMDGGSLDQVLKKAGRIPEQILGKVSIAVIKGLTYLREKHKIMHRDVKPSNILVNSRGEIKLCDFGVSGQLIDSMANSFVGTRSYMSPERLQGTHYSVQSDIWSMGLSLVEMAVGRYPIPPPDAKELELLFGCQVEGDAAETPPRPRTPGRPLSSYGMDSRPPMAIFELLDYIVNEPPAKLPSGVFSLEFQDFVNKCLIKNPAERADLKQLLVHAFIKRSDAEEVDFAGWLCSTIGLNQPSTPTHAASI.

The interval 1 to 26 (MPKKKPTPIQLNPTPDGSAVNGTSSA) is disordered. Positions 9–26 (IQLNPTPDGSAVNGTSSA) are enriched in polar residues. The Protein kinase domain occupies 68-361 (FEKISELGAG…LKQLLVHAFI (294 aa)). Residues 74-82 (LGAGNGGVV) and lysine 97 contribute to the ATP site. Residue aspartate 190 is the Proton acceptor of the active site. Residues serine 218 and serine 222 each carry the phosphoserine; by RAF modification. The segment at 270–307 (ELELLFGCQVEGDAAETPPRPRTPGRPLSSYGMDSRPP) is RAF1-binding. Residue threonine 286 is modified to Phosphothreonine. Threonine 292 is modified (phosphothreonine; by MAPK1). Serine 298 is subject to Phosphoserine; by PAK.

It belongs to the protein kinase superfamily. STE Ser/Thr protein kinase family. MAP kinase kinase subfamily. As to quaternary structure, found in a complex with at least BRAF, HRAS, MAP2K1, MAPK3/ERK1 and RGS14. Forms a heterodimer with MAP2K2/MEK2. Forms heterodimers with KSR2 which further dimerize to form tetramers. Interacts with KSR1 or KSR2 and BRAF; the interaction with KSR1 or KSR2 mediates KSR1-BRAF or KSR2-BRAF dimerization. Interacts with ARBB2, LAMTOR3, MAPK1/ERK2 and RAF1. Interacts with MAPK1/ERK2. Interacts with MORG1. Interacts with PPARG. Interacts with isoform 1 of VRK2. Interacts with SGK1. Interacts with BIRC6/bruce. Interacts with KAT7; the interaction promotes KAT7 phosphorylation. Interacts with RAF1 and NEK10; the interaction is required for ERK1/2-signaling pathway activation in response to UV irradiation. Interacts with TRAF3IP3. Interacts with MOS. In terms of processing, phosphorylation at Ser-218 and Ser-222 by MAP kinase kinase kinases (BRAF or MEKK1) positively regulates the kinase activity. Also phosphorylated at Thr-292 by MAPK1/ERK2 and at Ser-298 by PAK. MAPK1/ERK2 phosphorylation of Thr-292 occurs in response to cellular adhesion and leads to inhibition of Ser-298 phosphorylation by PAK. Autophosphorylated at Ser-218 and Ser-222, autophosphosphorylation is promoted by NEK10 following UV irradiation.

The protein localises to the cytoplasm. It localises to the cytoskeleton. It is found in the microtubule organizing center. The protein resides in the centrosome. Its subcellular location is the spindle pole body. The protein localises to the nucleus. It localises to the membrane. The catalysed reaction is L-seryl-[protein] + ATP = O-phospho-L-seryl-[protein] + ADP + H(+). It catalyses the reaction L-threonyl-[protein] + ATP = O-phospho-L-threonyl-[protein] + ADP + H(+). It carries out the reaction L-tyrosyl-[protein] + ATP = O-phospho-L-tyrosyl-[protein] + ADP + H(+). Ras proteins such as HRAS mediate the activation of RAF proteins such as RAF1 or BRAF which in turn activate extracellular signal-regulated kinases (ERK) through MAPK (mitogen-activated protein kinases) and ERK kinases MAP2K1/MEK1 and MAP2K2/MEK2. Activation occurs through phosphorylation of Ser-218 and Ser-222. MAP2K1/MEK1 binds KSR1 or KSR2 releasing the inhibitory intramolecular interaction between KSR1 or KSR2 protein kinase and N-terminal domains. This allows KSR1 or KSR2 dimerization with BRAF leading to BRAF activation and phosphorylation of MAP2K1. MAP2K1/MEK1 is also the target of negative feed-back regulation by its substrate kinases, such as MAPK1/ERK2. These phosphorylate MAP2K1/MEK1 on Thr-292, thereby facilitating dephosphorylation of the activating residues Ser-218 and Ser-222. Inhibited by serine/threonine phosphatase 2A. Functionally, dual specificity protein kinase which acts as an essential component of the MAP kinase signal transduction pathway. Binding of extracellular ligands such as growth factors, cytokines and hormones to their cell-surface receptors activates RAS and this initiates RAF1 activation. RAF1 then further activates the dual-specificity protein kinases MAP2K1/MEK1 and MAP2K2/MEK2. Both MAP2K1/MEK1 and MAP2K2/MEK2 function specifically in the MAPK/ERK cascade, and catalyze the concomitant phosphorylation of a threonine and a tyrosine residue in a Thr-Glu-Tyr sequence located in the extracellular signal-regulated kinases MAPK3/ERK1 and MAPK1/ERK2, leading to their activation and further transduction of the signal within the MAPK/ERK cascade. Activates BRAF in a KSR1 or KSR2-dependent manner; by binding to KSR1 or KSR2 releases the inhibitory intramolecular interaction between KSR1 or KSR2 protein kinase and N-terminal domains which promotes KSR1 or KSR2-BRAF dimerization and BRAF activation. Depending on the cellular context, this pathway mediates diverse biological functions such as cell growth, adhesion, survival and differentiation, predominantly through the regulation of transcription, metabolism and cytoskeletal rearrangements. One target of the MAPK/ERK cascade is peroxisome proliferator-activated receptor gamma (PPARG), a nuclear receptor that promotes differentiation and apoptosis. MAP2K1/MEK1 has been shown to export PPARG from the nucleus. The MAPK/ERK cascade is also involved in the regulation of endosomal dynamics, including lysosome processing and endosome cycling through the perinuclear recycling compartment (PNRC), as well as in the fragmentation of the Golgi apparatus during mitosis. The protein is Dual specificity mitogen-activated protein kinase kinase 1 (MAP2K1) of Cricetulus griseus (Chinese hamster).